The chain runs to 198 residues: Holliday junction branch migration complex subunit RuvA (198 aa).

The domain I stretch occupies residues 1–63 (MYDYIKGQLT…EDAHLLFGFH (63 aa)). Residues 64–142 (TKDEKDVFLK…EAPQETGNTK (79 aa)) form a domain II region. A flexible linker region spans residues 143-147 (ARSNK). The interval 148 to 198 (AGNTQLDEAIEALLALGYKATELKKIRAFFEGTSETAEQYIKSALKLLMKG) is domain III.

It belongs to the RuvA family. As to quaternary structure, homotetramer. Forms an RuvA(8)-RuvB(12)-Holliday junction (HJ) complex. HJ DNA is sandwiched between 2 RuvA tetramers; dsDNA enters through RuvA and exits via RuvB. An RuvB hexamer assembles on each DNA strand where it exits the tetramer. Each RuvB hexamer is contacted by two RuvA subunits (via domain III) on 2 adjacent RuvB subunits; this complex drives branch migration. In the full resolvosome a probable DNA-RuvA(4)-RuvB(12)-RuvC(2) complex forms which resolves the HJ.

It is found in the cytoplasm. Functionally, the RuvA-RuvB-RuvC complex processes Holliday junction (HJ) DNA during genetic recombination and DNA repair, while the RuvA-RuvB complex plays an important role in the rescue of blocked DNA replication forks via replication fork reversal (RFR). RuvA specifically binds to HJ cruciform DNA, conferring on it an open structure. The RuvB hexamer acts as an ATP-dependent pump, pulling dsDNA into and through the RuvAB complex. HJ branch migration allows RuvC to scan DNA until it finds its consensus sequence, where it cleaves and resolves the cruciform DNA. This Streptococcus pyogenes serotype M18 (strain MGAS8232) protein is Holliday junction branch migration complex subunit RuvA.